We begin with the raw amino-acid sequence, 335 residues long: Adenosine deaminase (335 aa).

Zn(2+)-binding residues include H12 and H14. The substrate site is built by H14 and D16. Residue H197 participates in Zn(2+) binding. E200 acts as the Proton donor in catalysis. D278 lines the Zn(2+) pocket.

This sequence belongs to the metallo-dependent hydrolases superfamily. Adenosine and AMP deaminases family. Adenosine deaminase subfamily. Zn(2+) serves as cofactor.

It carries out the reaction adenosine + H2O + H(+) = inosine + NH4(+). The enzyme catalyses 2'-deoxyadenosine + H2O + H(+) = 2'-deoxyinosine + NH4(+). Catalyzes the hydrolytic deamination of adenosine and 2-deoxyadenosine. The protein is Adenosine deaminase of Clostridium botulinum (strain Loch Maree / Type A3).